The following is a 183-amino-acid chain: Large ribosomal subunit protein uL22 (183 aa).

The protein belongs to the universal ribosomal protein uL22 family.

This Podocoryna carnea (Hydrozoan) protein is Large ribosomal subunit protein uL22 (RPL17).